The following is a 119-amino-acid chain: Large ribosomal subunit protein uL18 (119 aa).

Belongs to the universal ribosomal protein uL18 family. As to quaternary structure, part of the 50S ribosomal subunit; part of the 5S rRNA/L5/L18/L25 subcomplex. Contacts the 5S and 23S rRNAs.

In terms of biological role, this is one of the proteins that bind and probably mediate the attachment of the 5S RNA into the large ribosomal subunit, where it forms part of the central protuberance. The sequence is that of Large ribosomal subunit protein uL18 from Desulfovibrio desulfuricans (strain ATCC 27774 / DSM 6949 / MB).